The chain runs to 427 residues: Trigger factor (427 aa).

Residues 163–248 (GDTVVIDFVG…IHEVKTKEVP (86 aa)) enclose the PPIase FKBP-type domain.

The protein belongs to the FKBP-type PPIase family. Tig subfamily.

It localises to the cytoplasm. The catalysed reaction is [protein]-peptidylproline (omega=180) = [protein]-peptidylproline (omega=0). Involved in protein export. Acts as a chaperone by maintaining the newly synthesized protein in an open conformation. Functions as a peptidyl-prolyl cis-trans isomerase. This chain is Trigger factor, found in Streptococcus agalactiae serotype V (strain ATCC BAA-611 / 2603 V/R).